The primary structure comprises 1311 residues: DENN domain-containing protein 5B (1311 aa).

One can recognise a uDENN domain in the interval 53 to 270; that stretch reads ATAAGENFDQ…EVPLPASGRS (218 aa). The segment covering 154 to 165 has biased composition (polar residues); that stretch reads QAEHNTSAQNCT. The disordered stretch occupies residues 154–201; it reads QAEHNTSAQNCTSSSSSSSSSSSSSSMDSLSSSLDDVDSPSAHGGRRT. Positions 166–187 are enriched in low complexity; sequence SSSSSSSSSSSSSSMDSLSSSL. The region spanning 289-452 is the cDENN domain; sequence ELPLADFPLA…AVMSLQTSVL (164 aa). The dDENN domain maps to 454–619; sequence KELKSTSLRE…DNKIMSQWEE (166 aa). Positions 809–969 constitute an RUN 1 domain; the sequence is LEENTLIASL…DYFCFTSVFT (161 aa). Residues 854 to 874 are disordered; the sequence is EQQLESPVSNGQERRKTESSV. A helical transmembrane segment spans residues 962–982; the sequence is FCFTSVFTTIMIPYRAVIIPI. The 109-residue stretch at 973–1081 folds into the PLAT domain; it reads IPYRAVIIPI…DDGSLERVLI (109 aa). The 152-residue stretch at 1155–1306 folds into the RUN 2 domain; it reads TVLLCGEGGL…FPITLETSLT (152 aa).

The protein belongs to the RAB6IP1 family.

It is found in the membrane. Its function is as follows. Guanine nucleotide exchange factor (GEF) which may activate the small GTPases Rab. May promote the exchange of GDP to GTP, converting inactive GDP-bound Rab proteins into their active GTP-bound form. This chain is DENN domain-containing protein 5B (dennd5b), found in Danio rerio (Zebrafish).